The chain runs to 89 residues: Small ribosomal subunit protein uS15 (89 aa).

Belongs to the universal ribosomal protein uS15 family. In terms of assembly, part of the 30S ribosomal subunit. Forms a bridge to the 50S subunit in the 70S ribosome, contacting the 23S rRNA.

Its function is as follows. One of the primary rRNA binding proteins, it binds directly to 16S rRNA where it helps nucleate assembly of the platform of the 30S subunit by binding and bridging several RNA helices of the 16S rRNA. In terms of biological role, forms an intersubunit bridge (bridge B4) with the 23S rRNA of the 50S subunit in the ribosome. The polypeptide is Small ribosomal subunit protein uS15 (Mycobacterium bovis (strain ATCC BAA-935 / AF2122/97)).